The following is a 324-amino-acid chain: Interleukin-12 subunit beta (324 aa).

The N-terminal stretch at 1 to 22 (MHLQQLVVSWFSLVWLASPIVA) is a signal peptide. Residues 23 to 106 (IWELEKNVYV…LSQSLLLLHK (84 aa)) enclose the Ig-like C2-type domain. A disulfide bond links C50 and C90. N-linked (GlcNAc...) asparagine glycans are attached at residues N125, N135, and N218. Residues 233–324 (PPKNLQLNPL…WSEWASVSCN (92 aa)) form the Fibronectin type-III domain.

Belongs to the IL-12B family. Heterodimer with IL12A; disulfide-linked. The heterodimer is known as interleukin IL-12. Heterodimer with IL23A; disulfide-linked. The heterodimer is known as interleukin IL-23. Also secreted as a monomer. Interacts with NBR1; this interaction promotes IL-12 secretion.

Its subcellular location is the secreted. Its function is as follows. Cytokine that can act as a growth factor for activated T and NK cells, enhance the lytic activity of NK/lymphokine-activated killer cells, and stimulate the production of IFN-gamma by resting PBMC. In terms of biological role, associates with IL23A to form the IL-23 interleukin, a heterodimeric cytokine which functions in innate and adaptive immunity. IL-23 may constitute with IL-17 an acute response to infection in peripheral tissues. IL-23 binds to a heterodimeric receptor complex composed of IL12RB1 and IL23R, activates the Jak-Stat signaling cascade, stimulates memory rather than naive T-cells and promotes production of pro-inflammatory cytokines. IL-23 induces autoimmune inflammation and thus may be responsible for autoimmune inflammatory diseases and may be important for tumorigenesis. In Sus scrofa (Pig), this protein is Interleukin-12 subunit beta (IL12B).